We begin with the raw amino-acid sequence, 495 residues long: Guanosine-5'-triphosphate,3'-diphosphate pyrophosphatase (495 aa).

It belongs to the GppA/Ppx family. GppA subfamily.

The catalysed reaction is guanosine 3'-diphosphate 5'-triphosphate + H2O = guanosine 3',5'-bis(diphosphate) + phosphate + H(+). The protein operates within purine metabolism; ppGpp biosynthesis; ppGpp from GTP: step 2/2. In terms of biological role, catalyzes the conversion of pppGpp to ppGpp. Guanosine pentaphosphate (pppGpp) is a cytoplasmic signaling molecule which together with ppGpp controls the 'stringent response', an adaptive process that allows bacteria to respond to amino acid starvation, resulting in the coordinated regulation of numerous cellular activities. The polypeptide is Guanosine-5'-triphosphate,3'-diphosphate pyrophosphatase (Enterobacter sp. (strain 638)).